We begin with the raw amino-acid sequence, 186 residues long: Peptidyl-tRNA hydrolase (186 aa).

Tyrosine 14 is a binding site for tRNA. Catalysis depends on histidine 19, which acts as the Proton acceptor. The tRNA site is built by phenylalanine 64, asparagine 66, and asparagine 112.

Belongs to the PTH family. In terms of assembly, monomer.

Its subcellular location is the cytoplasm. The catalysed reaction is an N-acyl-L-alpha-aminoacyl-tRNA + H2O = an N-acyl-L-amino acid + a tRNA + H(+). In terms of biological role, hydrolyzes ribosome-free peptidyl-tRNAs (with 1 or more amino acids incorporated), which drop off the ribosome during protein synthesis, or as a result of ribosome stalling. Catalyzes the release of premature peptidyl moieties from peptidyl-tRNA molecules trapped in stalled 50S ribosomal subunits, and thus maintains levels of free tRNAs and 50S ribosomes. The protein is Peptidyl-tRNA hydrolase of Mycoplasma mycoides subsp. mycoides SC (strain CCUG 32753 / NCTC 10114 / PG1).